The following is a 215-amino-acid chain: 3-isopropylmalate dehydratase small subunit (215 aa).

It belongs to the LeuD family. LeuD type 1 subfamily. Heterodimer of LeuC and LeuD.

The catalysed reaction is (2R,3S)-3-isopropylmalate = (2S)-2-isopropylmalate. It participates in amino-acid biosynthesis; L-leucine biosynthesis; L-leucine from 3-methyl-2-oxobutanoate: step 2/4. Functionally, catalyzes the isomerization between 2-isopropylmalate and 3-isopropylmalate, via the formation of 2-isopropylmaleate. The sequence is that of 3-isopropylmalate dehydratase small subunit from Acinetobacter baumannii (strain AB307-0294).